Here is a 330-residue protein sequence, read N- to C-terminus: MAVTMADITKLRKMTGAGMMDCKNALTEAEGDYDKAMEIIRKKGQAVAAKRSERDASEGCVLAKTTGDYAVVIALKCETDFVAQNADFVKLTQDILDLAVANKCKTLDEVKALPMGNGTVQDAVVDRSGITGEKMELDGYMTVEGTSTAVYNHMNRNGLCTIVAFNKNVDDQLAKQVAMQIAAMNPIAIDEDGVSEEVKEKEIAVAIEKTKAEQVQKAVEAALKKANINPAHVDSEEHMESNMAKGWITAEDIAKAKEIIATVSAEKAAHLPEQMIQNIAKGRLGKFLKEVCLLNQEDIMDAKKTVREVLAAADPELKVLDFKRFTLKAE.

The involved in Mg(2+) ion dislocation from EF-Tu stretch occupies residues 79 to 82 (TDFV).

It belongs to the EF-Ts family.

The protein resides in the cytoplasm. Its function is as follows. Associates with the EF-Tu.GDP complex and induces the exchange of GDP to GTP. It remains bound to the aminoacyl-tRNA.EF-Tu.GTP complex up to the GTP hydrolysis stage on the ribosome. This chain is Elongation factor Ts, found in Bacteroides thetaiotaomicron (strain ATCC 29148 / DSM 2079 / JCM 5827 / CCUG 10774 / NCTC 10582 / VPI-5482 / E50).